Reading from the N-terminus, the 285-residue chain is Dermonecrotic toxin LlSicTox-alphaIII2 (285 aa).

His12 is an active-site residue. The Mg(2+) site is built by Glu32 and Asp34. Residue His47 is the Nucleophile of the active site. Cys51 and Cys57 are joined by a disulfide. Residue Asp91 coordinates Mg(2+).

The protein belongs to the arthropod phospholipase D family. Class I subfamily. Mg(2+) serves as cofactor. In terms of tissue distribution, expressed by the venom gland.

It localises to the secreted. The enzyme catalyses an N-(acyl)-sphingosylphosphocholine = an N-(acyl)-sphingosyl-1,3-cyclic phosphate + choline. It carries out the reaction an N-(acyl)-sphingosylphosphoethanolamine = an N-(acyl)-sphingosyl-1,3-cyclic phosphate + ethanolamine. The catalysed reaction is a 1-acyl-sn-glycero-3-phosphocholine = a 1-acyl-sn-glycero-2,3-cyclic phosphate + choline. It catalyses the reaction a 1-acyl-sn-glycero-3-phosphoethanolamine = a 1-acyl-sn-glycero-2,3-cyclic phosphate + ethanolamine. In terms of biological role, dermonecrotic toxins cleave the phosphodiester linkage between the phosphate and headgroup of certain phospholipids (sphingolipid and lysolipid substrates), forming an alcohol (often choline) and a cyclic phosphate. This toxin acts on sphingomyelin (SM) (228.2 U/mg). It may also act on ceramide phosphoethanolamine (CPE), lysophosphatidylcholine (LPC) and lysophosphatidylethanolamine (LPE), but not on lysophosphatidylserine (LPS), and lysophosphatidylglycerol (LPG). It acts by transphosphatidylation, releasing exclusively cyclic phosphate products as second products. Induces dermonecrosis, hemolysis, increased vascular permeability, edema, inflammatory response, and platelet aggregation. Is lethal to mice. This chain is Dermonecrotic toxin LlSicTox-alphaIII2, found in Loxosceles laeta (South American recluse spider).